A 1366-amino-acid chain; its full sequence is Protein HUA2-LIKE 2 (1366 aa).

Positions 24-81 (VGDLVLAKVKGFPAWPAVVSEPEKWDASPDSKKVFVHFFGTQQIAFCNPGDVEAFTEE) constitute a PWWP domain. The span at 111–124 (LKQQERASDPKSAE) shows a compositional bias: basic and acidic residues. 5 disordered regions span residues 111 to 138 (LKQQERASDPKSAEEGTLGSAENTTLMP), 203 to 319 (TYSS…SGSK), 384 to 403 (NVQTSQNSHEKFTERPCEEN), 427 to 451 (EANSSLQAEERSPKDTVVSATAQTS), and 787 to 808 (SESANDMQNNSSGSPNIPTGEK). Polar residues predominate over residues 213 to 252 (VRSQNCAPQNETCPVQRSKSPSRLQTEKLQSSMLQNSDGG). The span at 391 to 403 (SHEKFTERPCEEN) shows a compositional bias: basic and acidic residues. Residues 787–803 (SESANDMQNNSSGSPNI) are compositionally biased toward polar residues. In terms of domain architecture, CID spans 836–977 (DVQSTRESYE…HHIRELDSHS (142 aa)). Disordered regions lie at residues 1027–1076 (LKDE…TAER) and 1128–1366 (TSHQ…QRSD). Over residues 1032–1052 (GGSDSEGGCDSEGGSDSDGGD) the composition is skewed to acidic residues. The segment covering 1057-1066 (TPEHESRILE) has biased composition (basic and acidic residues). The segment covering 1138 to 1152 (PPLPSSSPPPPPAPP) has biased composition (pro residues). Residues 1191 to 1223 (LSGSTMHYQGPESSYISGVQLTNSIPQADGSNF) show a composition bias toward polar residues. Pro residues predominate over residues 1229–1244 (PSHPHPHPPPPPPPPQ). Composition is skewed to basic and acidic residues over residues 1251-1262 (EPGHVLKSHRDA) and 1275-1298 (CDERNFHDNHERMRHAPFENRDNW). Low complexity predominate over residues 1299-1309 (RYPPSSSYGSR).

Expressed throughout young primordia, and vegetative and reproductive apices.

It localises to the nucleus. Probable transcription factor that acts with partial redundancy with HULK1 and HULK3. Plays diverse and essential roles in the control of plant development, physiology and flowering time. This is Protein HUA2-LIKE 2 from Arabidopsis thaliana (Mouse-ear cress).